Consider the following 258-residue polypeptide: Synaptosomal-associated protein 29 (258 aa).

A disordered region spans residues 1-41; it reads MSAYPKSYNPFDDDGEDEGARPAPWRDARDLPDGPDAPADR. The segment covering 18–32 has biased composition (basic and acidic residues); the sequence is EGARPAPWRDARDLP. Residues 76–107 adopt a coiled-coil conformation; it reads ASSEELARQRGVLERTEKMVDKMDQDLKISQK. Phosphoserine is present on residues Ser-77, Ser-78, and Ser-114. Thr-130 and Thr-137 each carry phosphothreonine. Residues 150-191 form a disordered region; the sequence is ISTSKEQEAKYQASHPNLRKLDDTDPVPRGAGSAMSTDAYPK. A phosphoserine mark is found at Ser-163, Ser-182, Ser-185, Ser-204, and Ser-210. The region spanning 196–258 is the t-SNARE coiled-coil homology domain; the sequence is RAYHQKIDSN…KSTERKVRQL (63 aa).

This sequence belongs to the SNAP-25 family. Forms a SNARE complex, composed of VAMP8, SNAP29 and STX17, involved in fusion of autophagosome with lysosome. Interacts with multiple syntaxins including STX6. Interacts with EIPR1. Interacts with STX17; this interaction is increased in the absence of TMEM39A. As to quaternary structure, (Microbial infection) Interacts with Hantaan hantavirus nucleoprotein; this interaction prevents the breakdown of the viral glycoprotein N by virus-triggered autophagy. In terms of assembly, (Microbial infection) The interaction with STX17 is decreased in presence of SARS coronavirus-2/SARS-CoV-2 ORF3A protein. As to expression, found in brain, heart, kidney, liver, lung, placenta, skeletal muscle, spleen and pancreas.

Its subcellular location is the cytoplasm. The protein localises to the golgi apparatus membrane. It is found in the cytoplasmic vesicle. It localises to the autophagosome membrane. The protein resides in the cell projection. Its subcellular location is the cilium membrane. Its function is as follows. SNAREs, soluble N-ethylmaleimide-sensitive factor-attachment protein receptors, are essential proteins for fusion of cellular membranes. SNAREs localized on opposing membranes assemble to form a trans-SNARE complex, an extended, parallel four alpha-helical bundle that drives membrane fusion. SNAP29 is a SNARE involved in autophagy through the direct control of autophagosome membrane fusion with the lysososome membrane. Also plays a role in ciliogenesis by regulating membrane fusions. This is Synaptosomal-associated protein 29 from Homo sapiens (Human).